Reading from the N-terminus, the 191-residue chain is MADAVNAQTPSLSEQYHLEKEVKQDTSAKPVEVKEVAPEVTTQAEEVKTEQAKEESPVEEAVSVVEEKSESAPESTEVASEAPAAAEDNAEETPAAAEENNDENASEEVAEETPDEIKLETAPADFRFPTTNQTRHCFTRYVEYHRCVAAKGDDAPECDKFAKFYRSLCPSEWVDRWNEQRENGTFPGPLP.

Polar residues predominate over residues 1–14; that stretch reads MADAVNAQTPSLSE. Positions 1 to 126 are disordered; sequence MADAVNAQTP…IKLETAPADF (126 aa). Position 2 is an N-acetylalanine (alanine 2). 2 stretches are compositionally biased toward basic and acidic residues: residues 16 to 37 and 45 to 56; these read YHLE…KEVA and EEVKTEQAKEES. The span at 72–98 shows a compositional bias: low complexity; it reads APESTEVASEAPAAAEDNAEETPAAAE. Residues 99 to 114 are compositionally biased toward acidic residues; it reads ENNDENASEEVAEETP. The 44-residue stretch at 134–177 folds into the CHCH domain; it reads TRHCFTRYVEYHRCVAAKGDDAPECDKFAKFYRSLCPSEWVDRW. A Cx9C motif motif is present at residues 137–147; sequence CFTRYVEYHRC. Intrachain disulfides connect cysteine 137–cysteine 169 and cysteine 147–cysteine 158. The Cx10C motif signature appears at 158-169; the sequence is CDKFAKFYRSLC.

It belongs to the cytochrome c oxidase subunit 6B (TC 3.D.4.8) family. Expressed in the whole plant.

It is found in the mitochondrion. Its function is as follows. This protein is one of the nuclear-coded polypeptide chains of cytochrome c oxidase, the terminal oxidase in mitochondrial electron transport. This protein may be one of the heme-binding subunits of the oxidase. The polypeptide is Cytochrome c oxidase subunit 6b-1 (COX6B-1) (Arabidopsis thaliana (Mouse-ear cress)).